The chain runs to 564 residues: Proline--tRNA ligase 1 (564 aa).

It belongs to the class-II aminoacyl-tRNA synthetase family. ProS type 1 subfamily. In terms of assembly, homodimer.

The protein resides in the cytoplasm. The enzyme catalyses tRNA(Pro) + L-proline + ATP = L-prolyl-tRNA(Pro) + AMP + diphosphate. Functionally, catalyzes the attachment of proline to tRNA(Pro) in a two-step reaction: proline is first activated by ATP to form Pro-AMP and then transferred to the acceptor end of tRNA(Pro). As ProRS can inadvertently accommodate and process non-cognate amino acids such as alanine and cysteine, to avoid such errors it has two additional distinct editing activities against alanine. One activity is designated as 'pretransfer' editing and involves the tRNA(Pro)-independent hydrolysis of activated Ala-AMP. The other activity is designated 'posttransfer' editing and involves deacylation of mischarged Ala-tRNA(Pro). The misacylated Cys-tRNA(Pro) is not edited by ProRS. In Streptomyces avermitilis (strain ATCC 31267 / DSM 46492 / JCM 5070 / NBRC 14893 / NCIMB 12804 / NRRL 8165 / MA-4680), this protein is Proline--tRNA ligase 1.